Consider the following 152-residue polypeptide: Protein-export protein SecB (152 aa).

This sequence belongs to the SecB family. Homotetramer, a dimer of dimers. One homotetramer interacts with 1 SecA dimer.

Its subcellular location is the cytoplasm. Functionally, one of the proteins required for the normal export of preproteins out of the cell cytoplasm. It is a molecular chaperone that binds to a subset of precursor proteins, maintaining them in a translocation-competent state. It also specifically binds to its receptor SecA. In Thiobacillus denitrificans (strain ATCC 25259 / T1), this protein is Protein-export protein SecB.